The chain runs to 29 residues: Dermaseptin-H7 (29 aa).

A Leucine amide modification is found at L29.

Belongs to the frog skin active peptide (FSAP) family. Dermaseptin subfamily. Expressed by the skin glands.

The protein localises to the secreted. Functionally, has antibacterial activity against the Gram-negative bacterium E.coli and the Gram-positive bacterium S.aureus. Has antiprotozoal activity against L.amazonensis. Has antifungal activity. Has no hemolytic activity. The sequence is that of Dermaseptin-H7 from Pithecopus hypochondrialis (Orange-legged leaf frog).